Consider the following 322-residue polypeptide: Sideroflexin-1 (322 aa).

Position 2 is an N-acetylserine (Ser-2). Over 2-102 the chain is Mitochondrial matrix; sequence SGEVPPNINI…MSAQVPMNMT (101 aa). The chain crosses the membrane as a helical span at residues 103–120; the sequence is ITGCMMTFYRTTPAVLFW. The Mitochondrial intermembrane segment spans residues 121-146; the sequence is QWINQSFNAVVNYTNRSGDAPLTVNE. The helical transmembrane segment at 147 to 167 threads the bilayer; sequence LGTAYVSATTGAVATALGLNA. At 168 to 174 the chain is on the mitochondrial matrix side; that stretch reads LTKRVSP. A helical membrane pass occupies residues 175 to 195; that stretch reads LIGRFVPFAAVAAANCINIPL. At 196–228 the chain is on the mitochondrial intermembrane side; the sequence is MRQRELKVGIPVTDENGTRLGESTNAAKQAITQ. The chain crosses the membrane as a helical span at residues 229–249; the sequence is VVISRILMAAPGMAIPPFIMN. Over 250–266 the chain is Mitochondrial matrix; the sequence is TLEKKAFLKRFPWMSAP. A helical membrane pass occupies residues 267-287; that stretch reads IQVTLVGFCLVFATPLCCALF. Over 288-322 the chain is Mitochondrial intermembrane; the sequence is PQKSSMSVTSLEDELQASIQRTHPEIRRVYFNKGL.

The protein belongs to the sideroflexin family. In terms of tissue distribution, widely expressed, with highest expression in kidney and liver.

It localises to the mitochondrion inner membrane. It catalyses the reaction L-serine(in) = L-serine(out). The enzyme catalyses L-alanine(in) = L-alanine(out). It carries out the reaction L-cysteine(in) = L-cysteine(out). In terms of biological role, amino acid transporter importing serine, an essential substrate of the mitochondrial branch of the one-carbon pathway, into mitochondria. Mitochondrial serine is then converted to glycine and formate, which exits to the cytosol where it is used to generate the charged folates that serve as one-carbon donors. May also transport other amino acids including alanine and cysteine. The protein is Sideroflexin-1 of Mus musculus (Mouse).